A 124-amino-acid chain; its full sequence is Kinocilin (124 aa).

2 helical membrane passes run 13–33 (LQLA…GISV) and 40–60 (MGGV…YPFL). Residues 80–124 (PHPGADHGEGRSSTNGNKEGARSSLSTVSRTLEKLKPGTRGAEEC) form a disordered region. Residues 90–109 (RSSTNGNKEGARSSLSTVSR) are compositionally biased toward polar residues. The span at 110-124 (TLEKLKPGTRGAEEC) shows a compositional bias: basic and acidic residues.

It localises to the membrane. Its function is as follows. May play a role in stabilizing dense microtubular networks or in vesicular trafficking. This chain is Kinocilin (KNCN), found in Homo sapiens (Human).